The chain runs to 183 residues: MSNPQEELLPPSAEDDELTLPRASINKIIKELVPTVRVANESRELILNCCSEFIHLISSEANEVCNMRNKKTINAEHVLEALERLGFHDYKQEAEAVLHDCKEVAAKRRRQSTRLENLGIPEEELLRQQQELFAKAREEQAREEQQQWMSMQAAAMVQRPPLADGSVASKPSEDDDDDDDDDY.

The region spanning 19–82 (TLPRASINKI…INAEHVLEAL (64 aa)) is the Histone-fold domain. The interval 92-183 (QEAEAVLHDC…DDDDDDDDDY (92 aa)) is repression of TATA-containing promoters. Positions 155-183 (AMVQRPPLADGSVASKPSEDDDDDDDDDY) are disordered. Positions 173-183 (EDDDDDDDDDY) are enriched in acidic residues.

Belongs to the NC2 beta/DR1 family. Component of the Ada2a-containing (ATAC) complex composed of at least Ada2a, Atac1, Hcf, Ada3, Gcn5, Mocs2B, Charac-14, Atac3, Atac2, NC2beta and wds. Homodimer. Interacts with NC2-alpha/Drap1 to form the dNC2 complex.

The protein resides in the nucleus. Its function is as follows. Bifunctional basic transcription factor. Activates transcription of DPE (Downstream Promoter Element) containing promoters while repressing transcription of promoters which contain TATA elements. Together with Chrac-14, promotes nucleosome sliding of ATP-dependent nucleosome remodeling complexes. This chain is Protein Dr1 (NC2beta), found in Drosophila melanogaster (Fruit fly).